Consider the following 261-residue polypeptide: Large ribosomal subunit protein uL3 (261 aa).

Over residues 138–148 (SVSHRSHGSTG) the composition is skewed to low complexity. Disordered stretches follow at residues 138 to 163 (SVSHRSHGSTGQRQDPGRTFPGKKMA) and 214 to 261 (ADAP…GDQA). Q151 bears the N5-methylglutamine mark. The span at 227–261 (APTPVEAAADEAAPAEEPAVTEAPAAEATEAGDQA) shows a compositional bias: low complexity.

It belongs to the universal ribosomal protein uL3 family. As to quaternary structure, part of the 50S ribosomal subunit. Forms a cluster with proteins L14 and L19. In terms of processing, methylated by PrmB.

One of the primary rRNA binding proteins, it binds directly near the 3'-end of the 23S rRNA, where it nucleates assembly of the 50S subunit. The chain is Large ribosomal subunit protein uL3 from Phenylobacterium zucineum (strain HLK1).